The sequence spans 215 residues: Protein C' (215 aa).

A disordered region spans residues 12–34 (MPSFLKKILKLRGRRQEDESRSR). The segment at 15-22 (FLKKILKL) is involved in self-degradation and in host STAT1 degradation.

It belongs to the respirovirus protein C family. The different isoforms interact (via C-terminus) with unphosphorylated and phosphorylated human STAT1 (via N-terminus), favoring the formation of parallel STAT1 homodimers. The different isoforms do not interact with host STAT2. C protein interacts with L protein; this interaction has an inhibitory effect on viral transcription and replication. Post-translationally, protein Y2 is produced not only by alternative initiation, but also by proteolytic cleavage of C'. Only alternative initiation is detected in vitro, whereas in vivo cleavage seems to be predominant.

Its subcellular location is the host cytoplasm. Its function is as follows. The different products prevent the establishment of cellular antiviral state by blocking the interferon-alpha/beta (IFN-alpha/beta) and IFN-gamma signaling pathways. They inhibit IFN-alpha/beta induced tyrosine phosphorylation of STAT1 and STAT2. Blocking the IFN-alpha/beta pathway requires binding to STAT1 in the cytoplasm. They inhibit IFN-gamma induced serine phosphorylation of STAT1. Block the IFN-gamma pathway by binding to and stabilizing the parallel form of the STAT1 dimer, further inducing high-molecular-weight complex formation and inhibition of transcription by IFN-gamma. May also have a role in preventing the cell to enter apoptosis. Modulate regulation of viral transcription and replication. Overexpression inhibits the viral RNA polymerase. The absence of all C', C and Y2 proteins leads to viral delayed growth. Plays an important role in virion particles release. Modulates virion shape. The protein is Protein C' (P/V/C) of Cavia cutleri (Guinea pig).